Reading from the N-terminus, the 150-residue chain is Protein Smg homolog (150 aa).

Belongs to the Smg family.

The protein is Protein Smg homolog of Methylobacillus flagellatus (strain ATCC 51484 / DSM 6875 / VKM B-1610 / KT).